Consider the following 450-residue polypeptide: Tubulin alpha chain (450 aa).

Gln-11 contacts GTP. At Lys-40 the chain carries N6-acetyllysine. GTP-binding residues include Glu-71, Ser-140, Gly-144, Thr-145, Thr-179, Asn-206, and Asn-228. Position 71 (Glu-71) interacts with Mg(2+). The active site involves Glu-254. The tract at residues 431–450 (DYEEVGTDSVGEEDEEGEEY) is disordered.

The protein belongs to the tubulin family. As to quaternary structure, dimer of alpha and beta chains. A typical microtubule is a hollow water-filled tube with an outer diameter of 25 nm and an inner diameter of 15 nM. Alpha-beta heterodimers associate head-to-tail to form protofilaments running lengthwise along the microtubule wall with the beta-tubulin subunit facing the microtubule plus end conferring a structural polarity. Microtubules usually have 13 protofilaments but different protofilament numbers can be found in some organisms and specialized cells. The cofactor is Mg(2+). Some glutamate residues at the C-terminus are polyglycylated, resulting in polyglycine chains on the gamma-carboxyl group. Glycylation is mainly limited to tubulin incorporated into axonemes (cilia and flagella) whereas glutamylation is prevalent in neuronal cells, centrioles, axonemes, and the mitotic spindle. Both modifications can coexist on the same protein on adjacent residues, and lowering polyglycylation levels increases polyglutamylation, and reciprocally. The precise function of polyglycylation is still unclear. Post-translationally, some glutamate residues at the C-terminus are polyglutamylated, resulting in polyglutamate chains on the gamma-carboxyl group. Polyglutamylation plays a key role in microtubule severing by spastin (SPAST). SPAST preferentially recognizes and acts on microtubules decorated with short polyglutamate tails: severing activity by SPAST increases as the number of glutamates per tubulin rises from one to eight, but decreases beyond this glutamylation threshold. In terms of processing, acetylation of alpha chains at Lys-40 is located inside the microtubule lumen. This modification has been correlated with increased microtubule stability, intracellular transport and ciliary assembly. Undergoes a tyrosination/detyrosination cycle, the cyclic removal and re-addition of a C-terminal tyrosine residue by the enzymes tubulin tyrosine carboxypeptidase (MATCAP, VASH1 or VASH2) and tubulin tyrosine ligase (TTL), respectively. Post-translationally, tyrosination promotes microtubule interaction with CAP-Gly microtubule plus-end tracking proteins. Tyrosinated tubulins regulate the initiation of dynein-driven motility. In terms of processing, detyrosination is involved in metaphase plate congression by guiding chromosomes during mitosis. Detyrosination increases microtubules-dependent mechanotransduction in dystrophic cardiac and skeletal muscle. In cardiomyocytes, detyrosinated microtubules are required to resist to contractile compression during contraction.

The protein resides in the cytoplasm. It localises to the cytoskeleton. The catalysed reaction is GTP + H2O = GDP + phosphate + H(+). Tubulin is the major constituent of microtubules, a cylinder consisting of laterally associated linear protofilaments composed of alpha- and beta-tubulin heterodimers. Microtubules grow by the addition of GTP-tubulin dimers to the microtubule end, where a stabilizing cap forms. Below the cap, tubulin dimers are in GDP-bound state, owing to GTPase activity of alpha-tubulin. The polypeptide is Tubulin alpha chain (Oncorhynchus keta (Chum salmon)).